The chain runs to 272 residues: Zinc transporter ZupT (272 aa).

A run of 8 helical transmembrane segments spans residues 12–32 (ALAV…MVVF), 40–60 (LLAF…LSEI), 76–96 (LGFT…MVID), 126–146 (LLTA…TFFA), 158–178 (AFAI…PVYF), 187–207 (FGAS…GYLL), 211–231 (VLSE…MVFL), and 247–267 (HETV…LVLF). Residues N136 and E139 each contribute to the Fe(2+) site. E139 and H164 together coordinate Zn(2+). Fe(2+)-binding residues include N165, E168, and E197. Residue E168 participates in Zn(2+) binding.

It belongs to the ZIP transporter (TC 2.A.5) family. ZupT subfamily.

Its subcellular location is the cell inner membrane. The enzyme catalyses Zn(2+)(in) = Zn(2+)(out). In terms of biological role, mediates zinc uptake. May also transport other divalent cations. This chain is Zinc transporter ZupT, found in Xanthomonas campestris pv. campestris (strain ATCC 33913 / DSM 3586 / NCPPB 528 / LMG 568 / P 25).